A 414-amino-acid polypeptide reads, in one-letter code: Nucleoredoxin (414 aa).

Residues 131–305 enclose the Thioredoxin domain; the sequence is LLVKDDPEGL…ELNAVQLNEG (175 aa).

It belongs to the nucleoredoxin family.

The protein localises to the cytoplasm. The protein resides in the cytosol. Its subcellular location is the nucleus. It catalyses the reaction [protein]-dithiol + NAD(+) = [protein]-disulfide + NADH + H(+). The enzyme catalyses [protein]-dithiol + NADP(+) = [protein]-disulfide + NADPH + H(+). Functions as a redox-dependent negative regulator of the Wnt signaling pathway. The polypeptide is Nucleoredoxin (nxn) (Xenopus laevis (African clawed frog)).